An 863-amino-acid chain; its full sequence is Protein translocase subunit SecA (863 aa).

ATP-binding positions include Gln-88, Gly-106–Thr-110, and Asp-496. The tract at residues Glu-818–Lys-842 is disordered. Zn(2+)-binding residues include Cys-836, Cys-838, Cys-847, and Cys-848.

The protein belongs to the SecA family. As to quaternary structure, monomer and homodimer. Part of the essential Sec protein translocation apparatus which comprises SecA, SecYEG and auxiliary proteins SecDF-YajC and YidC. Zn(2+) serves as cofactor.

It is found in the cell inner membrane. It localises to the cytoplasm. It carries out the reaction ATP + H2O + cellular proteinSide 1 = ADP + phosphate + cellular proteinSide 2.. Its function is as follows. Part of the Sec protein translocase complex. Interacts with the SecYEG preprotein conducting channel. Has a central role in coupling the hydrolysis of ATP to the transfer of proteins into and across the cell membrane, serving as an ATP-driven molecular motor driving the stepwise translocation of polypeptide chains across the membrane. This Nitratiruptor sp. (strain SB155-2) protein is Protein translocase subunit SecA.